The primary structure comprises 132 residues: Small ribosomal subunit protein uS8 (132 aa).

It belongs to the universal ribosomal protein uS8 family. In terms of assembly, part of the 30S ribosomal subunit. Contacts proteins S5 and S12.

Functionally, one of the primary rRNA binding proteins, it binds directly to 16S rRNA central domain where it helps coordinate assembly of the platform of the 30S subunit. The sequence is that of Small ribosomal subunit protein uS8 from Flavobacterium psychrophilum (strain ATCC 49511 / DSM 21280 / CIP 103535 / JIP02/86).